A 93-amino-acid polypeptide reads, in one-letter code: Probable chloroethene reductive dehalogenase membrane anchor protein (93 aa).

Transmembrane regions (helical) follow at residues 3 to 23, 35 to 55, and 64 to 84; these read AIYF…FTWF, WVLG…TYAS, and SAWI…LFAA.

This sequence belongs to the PceB family.

It is found in the cell membrane. May act as a membrane anchor for the chloroethene reductive dehalogenase VcrA. The protein is Probable chloroethene reductive dehalogenase membrane anchor protein of Dehalococcoides mccartyi (strain VS).